The following is a 611-amino-acid chain: Zinc metalloproteinase-disintegrin-like MTP9 (611 aa).

Residues 1-20 (MIEVLLVTICFTVFPYQGSS) form the signal peptide. The propeptide occupies 21-191 (IILESGNVND…DEPIEKISQL (171 aa)). The Peptidase M12B domain occupies 205–401 (KYIELYVVVD…VRPQCILNKP (197 aa)). Glutamate 208 lines the Ca(2+) pocket. Asparagine 282 carries an N-linked (GlcNAc...) asparagine glycan. A Ca(2+)-binding site is contributed by aspartate 292. 3 disulfide bridges follow: cysteine 316-cysteine 396, cysteine 356-cysteine 380, and cysteine 358-cysteine 363. Positions 341, 345, and 351 each coordinate Zn(2+). Residues cysteine 396, asparagine 399, asparagine 414, phenylalanine 416, glutamate 418, glutamate 421, and aspartate 424 each contribute to the Ca(2+) site. The Disintegrin domain occupies 409–493 (PPVCGNYFVE…ECPTDSFQRN (85 aa)). Cystine bridges form between cysteine 412–cysteine 441, cysteine 423–cysteine 436, cysteine 425–cysteine 431, cysteine 435–cysteine 456, cysteine 447–cysteine 453, cysteine 452–cysteine 478, cysteine 465–cysteine 485, cysteine 472–cysteine 504, cysteine 497–cysteine 509, cysteine 516–cysteine 566, cysteine 531–cysteine 573, cysteine 541–cysteine 575, cysteine 544–cysteine 554, cysteine 561–cysteine 599, and cysteine 593–cysteine 604. The D/ECD-tripeptide signature appears at 471-473 (DCD). Positions 473, 474, 476, and 488 each coordinate Ca(2+). N-linked (GlcNAc...) asparagine glycans are attached at residues asparagine 548 and asparagine 570.

The protein belongs to the venom metalloproteinase (M12B) family. P-III subfamily. As to quaternary structure, monomer. The cofactor is Zn(2+). As to expression, expressed by the venom gland.

It is found in the secreted. Snake venom zinc metalloproteinase that may impair hemostasis in the prey. The chain is Zinc metalloproteinase-disintegrin-like MTP9 from Drysdalia coronoides (White-lipped snake).